A 230-amino-acid polypeptide reads, in one-letter code: Small ribosomal subunit protein uS3 (230 aa).

One can recognise a KH type-2 domain in the interval 43-95 (VNRVIIYSARPKMISEERKAHLAKLLELKFGLEKPVIEVLPIENPNLDAHVIA).

It belongs to the universal ribosomal protein uS3 family. In terms of assembly, part of the 30S ribosomal subunit.

Its function is as follows. Binds the lower part of the 30S subunit head. The chain is Small ribosomal subunit protein uS3 from Nanoarchaeum equitans (strain Kin4-M).